The primary structure comprises 793 residues: Probable serine/threonine-protein kinase fnkA (793 aa).

The Protein kinase domain maps to 11–358 (WEILSQLGTG…IINLISHNFI (348 aa)). ATP contacts are provided by residues 17–25 (LGTGAFGRV) and K46. The active-site Proton acceptor is D138. FNIP repeat units lie at residues 403–444 (FNQT…FGAR), 470–514 (YNQP…ILGD), 515–557 (YDQK…LGYR), 558–601 (FNKA…LGYC), and 691–733 (FIRP…LGSR).

The protein belongs to the protein kinase superfamily. STE Ser/Thr protein kinase family. Mg(2+) is required as a cofactor.

It catalyses the reaction L-seryl-[protein] + ATP = O-phospho-L-seryl-[protein] + ADP + H(+). The catalysed reaction is L-threonyl-[protein] + ATP = O-phospho-L-threonyl-[protein] + ADP + H(+). This is Probable serine/threonine-protein kinase fnkA from Dictyostelium discoideum (Social amoeba).